Consider the following 89-residue polypeptide: MSVTKEIKTDIINQFGGSEKNTGQTEVQIALFSRRISDLTGHLKLHPKDKHSRHGLLKLVGKRKSLVAYLKKTDIGRYRKVLADLDLRK.

It belongs to the universal ribosomal protein uS15 family. Part of the 30S ribosomal subunit. Forms a bridge to the 50S subunit in the 70S ribosome, contacting the 23S rRNA.

One of the primary rRNA binding proteins, it binds directly to 16S rRNA where it helps nucleate assembly of the platform of the 30S subunit by binding and bridging several RNA helices of the 16S rRNA. Functionally, forms an intersubunit bridge (bridge B4) with the 23S rRNA of the 50S subunit in the ribosome. The sequence is that of Small ribosomal subunit protein uS15 from Chlorobium phaeobacteroides (strain BS1).